Here is a 431-residue protein sequence, read N- to C-terminus: UPF0597 protein BVU_2091 (431 aa).

The protein belongs to the UPF0597 family.

This is UPF0597 protein BVU_2091 from Phocaeicola vulgatus (strain ATCC 8482 / DSM 1447 / JCM 5826 / CCUG 4940 / NBRC 14291 / NCTC 11154) (Bacteroides vulgatus).